Consider the following 234-residue polypeptide: MDLGTIKGELDNNGYSTIKDFTADVRLMFENALTYNADSSPIWKHAKTLLYFHRKHDEHVKVKEDTNSAQPTLLRLQIIQIVKMLHLHLHLHLHLHLHLHLHLHLHLHLHLHLHLHLHLHLHLHLHLQNNQIINNNSNNNNNNNNNNNNNNNNNNNNNNNNNNNNNNNNNSNSTTNSSSSSSSSSSSSSSSSSSTTTTQKKYSDEERRNLMERINELAPDYVQEVLNIIDPNAS.

Residues 1–60 (MDLGTIKGELDNNGYSTIKDFTADVRLMFENALTYNADSSPIWKHAKTLLYFHRKHDEHV) enclose the Bromo domain. Positions 134 to 194 (NNNSNNNNNN…SSSSSSSSSS (61 aa)) are enriched in low complexity. A disordered region spans residues 134–209 (NNNSNNNNNN…KKYSDEERRN (76 aa)).

This chain is Bromodomain-containing protein DDB_G0271118, found in Dictyostelium discoideum (Social amoeba).